We begin with the raw amino-acid sequence, 264 residues long: Thymidylate synthase (264 aa).

Arg-21 lines the dUMP pocket. His-51 contributes to the (6R)-5,10-methylene-5,6,7,8-tetrahydrofolate binding site. Position 126 to 127 (126 to 127 (RR)) interacts with dUMP. Cys-146 acts as the Nucleophile in catalysis. DUMP is bound by residues 166–169 (RSCD), Asn-177, and 207–209 (HLY). Asp-169 serves as a coordination point for (6R)-5,10-methylene-5,6,7,8-tetrahydrofolate. Ala-263 is a (6R)-5,10-methylene-5,6,7,8-tetrahydrofolate binding site.

Belongs to the thymidylate synthase family. Bacterial-type ThyA subfamily. Homodimer.

It localises to the cytoplasm. The catalysed reaction is dUMP + (6R)-5,10-methylene-5,6,7,8-tetrahydrofolate = 7,8-dihydrofolate + dTMP. It participates in pyrimidine metabolism; dTTP biosynthesis. Functionally, catalyzes the reductive methylation of 2'-deoxyuridine-5'-monophosphate (dUMP) to 2'-deoxythymidine-5'-monophosphate (dTMP) while utilizing 5,10-methylenetetrahydrofolate (mTHF) as the methyl donor and reductant in the reaction, yielding dihydrofolate (DHF) as a by-product. This enzymatic reaction provides an intracellular de novo source of dTMP, an essential precursor for DNA biosynthesis. In Klebsiella pneumoniae subsp. pneumoniae (strain ATCC 700721 / MGH 78578), this protein is Thymidylate synthase.